Reading from the N-terminus, the 350-residue chain is Izumo sperm-egg fusion protein 1 (350 aa).

A signal peptide spans 1-21 (MGPHFTLLCAALAGCLLPAEG). 5 cysteine pairs are disulfide-bonded: Cys22/Cys149, Cys25/Cys152, Cys135/Cys159, Cys139/Cys165, and Cys182/Cys233. At 22-292 (CVICDPSVVL…LQPEKMLASR (271 aa)) the chain is on the extracellular side. Residues 148–160 (WCKNCKKEVHACR) form an important for interaction with IZUMO1R region. Residues 167–251 (ERNVEVPQME…PATIINFHVT (85 aa)) enclose the Ig-like C2-type domain. N-linked (GlcNAc...) asparagine glycosylation occurs at Asn204. Residues 293 to 313 (LLGLLICGSLALITGLTFAIF) traverse the membrane as a helical segment. The Cytoplasmic segment spans residues 314–350 (RRRKVIDFIKSSLFGLGSGAAEQTQVPKEKATDSRQQ). A Phosphoserine modification is found at Ser325.

The protein belongs to the Izumo family. As to quaternary structure, monomer, homodimer; disulfide-linked and homooligomer; depending on the context. Interacts with IZUMO1R/JUNO. IZUMO1 and IZUMO1R/JUNO form a complex with 1:1 stoichiometry. In gamete recognition, IZUMO1R/JUNO first binds to monomeric IZUMO1. The weak, but specific interaction with IZUMO1R/JUNO induces IZUMO1 homodimerization. The process follows a tight binding phase where IZUMO1 bends the entire structure towards the sperm membrane side through a thiol-disulfide exchange reaction. The molecule no longer binds to IZUMO1R/JUNO and instead binds to a putative second oocyte receptor. Interacts with ACE3. Part of a oolemmal binding multimeric complex (IZUMO1 complex) composed at least of IZUMO1 and GLIPR1L1; the complex assemblage is influenced by the maturation status of the male germ cell. Interacts with GLIPR1L1. Interacts with FREY; the interaction retains IZUMO1 at the endoplasmic reticulum membrane and coordinates IZUMO1 complex assembly. Interacts with FCRL3/MAIA (via extracellular domain); the interaction replaces IZUMO1R/JUNO as IZUMO1 receptor after sperm-egg adhesion. Interacts with WDR54. Forms a complex with SPACA6 and TMEM81 on spermatocyte cell membrane. N-glycosylated. Glycosylation is not essential for fusion and for proper protein trafficking in sperm. In terms of processing, phosphorylated. The cytoplasmic C-terminus is phosphorylated and undergoes phosphorylation changes during epididymal transit. As to expression, sperm-specific (at protein level). Detectable on sperm surface only after the acrosome reaction.

The protein localises to the cell membrane. It localises to the cytoplasmic vesicle. It is found in the secretory vesicle. Its subcellular location is the acrosome membrane. Functionally, essential sperm cell-surface protein required for fertilization by acting as a ligand for IZUMO1R/JUNO receptor on egg. The IZUMO1:IZUMO1R/JUNO interaction is a necessary adhesion event between sperm and egg that is required for fertilization but is not sufficient for cell fusion. The ligand-receptor interaction probably does not act as a membrane 'fusogen'. Acts a ligand for the human-specific oolemma epitope FCRL3/MAIA during fertilization. FCRL3/MAIA replaces IZUMO1R/JUNO as IZUMO1 receptor after sperm-egg adhesion, which permits species-specific gamete fusion. Plays a critical role in sperm-oolemma binding prior to plasma membrane fusion. Can mediate cell-cell fusion in cultured mammalian cells independently of its binding to IZUMO1R/JUNO. This Homo sapiens (Human) protein is Izumo sperm-egg fusion protein 1.